An 87-amino-acid polypeptide reads, in one-letter code: Small ribosomal subunit protein bS16 (87 aa).

This sequence belongs to the bacterial ribosomal protein bS16 family.

This Fusobacterium nucleatum subsp. nucleatum (strain ATCC 25586 / DSM 15643 / BCRC 10681 / CIP 101130 / JCM 8532 / KCTC 2640 / LMG 13131 / VPI 4355) protein is Small ribosomal subunit protein bS16.